Reading from the N-terminus, the 1030-residue chain is Exportin-T (1030 aa).

This sequence belongs to the exportin family.

Its subcellular location is the nucleus. It localises to the cytoplasm. TRNA nucleus export receptor which facilitates tRNA translocation across the nuclear pore complex. Involved in pre-tRNA splicing, probably by affecting the interaction of pre-tRNA with splicing endonuclease. In Aspergillus niger (strain ATCC MYA-4892 / CBS 513.88 / FGSC A1513), this protein is Exportin-T (los1).